The primary structure comprises 113 residues: Flagellar transcriptional regulator FlhD (113 aa).

The protein belongs to the FlhD family. In terms of assembly, homodimer; disulfide-linked. Forms a heterohexamer composed of two FlhC and four FlhD subunits. Each FlhC binds a FlhD dimer, forming a heterotrimer, and a hexamer assembles by dimerization of two heterotrimers.

It localises to the cytoplasm. Functions in complex with FlhC as a master transcriptional regulator that regulates transcription of several flagellar and non-flagellar operons by binding to their promoter region. Activates expression of class 2 flagellar genes, including fliA, which is a flagellum-specific sigma factor that turns on the class 3 genes. Also regulates genes whose products function in a variety of physiological pathways. The sequence is that of Flagellar transcriptional regulator FlhD from Salmonella typhi.